We begin with the raw amino-acid sequence, 145 residues long: Class I hydrophobin rodE (145 aa).

Cystine bridges form between Cys-43/Cys-126, Cys-59/Cys-120, Cys-60/Cys-95, and Cys-127/Cys-140.

The protein belongs to the fungal hydrophobin family. As to quaternary structure, self-assembles to form functional amyloid fibrils called rodlets. Self-assembly into fibrillar rodlets occurs spontaneously at hydrophobic:hydrophilic interfaces and the rodlets further associate laterally to form amphipathic monolayers.

Its function is as follows. Aerial growth, conidiation, and dispersal of filamentous fungi in the environment rely upon a capability of their secreting small amphipathic proteins called hydrophobins (HPBs) with low sequence identity. Class I can self-assemble into an outermost layer of rodlet bundles on aerial cell surfaces, conferring cellular hydrophobicity that supports fungal growth, development and dispersal; whereas Class II form highly ordered films at water-air interfaces through intermolecular interactions but contribute nothing to the rodlet structure. RodE is a class I hydrophobin that, unlike rodA, is not required for rodlet formation. This chain is Class I hydrophobin rodE, found in Aspergillus fumigatus (strain ATCC MYA-4609 / CBS 101355 / FGSC A1100 / Af293) (Neosartorya fumigata).